We begin with the raw amino-acid sequence, 261 residues long: Enolase-phosphatase E1 (261 aa).

Mg(2+) contacts are provided by Asp16 and Glu18. Residues 153–154 (SS) and Lys187 contribute to the substrate site. Asp212 contacts Mg(2+).

Belongs to the HAD-like hydrolase superfamily. MasA/MtnC family. As to quaternary structure, monomer. It depends on Mg(2+) as a cofactor.

It localises to the cytoplasm. It is found in the nucleus. The enzyme catalyses 5-methylsulfanyl-2,3-dioxopentyl phosphate + H2O = 1,2-dihydroxy-5-(methylsulfanyl)pent-1-en-3-one + phosphate. It participates in amino-acid biosynthesis; L-methionine biosynthesis via salvage pathway; L-methionine from S-methyl-5-thio-alpha-D-ribose 1-phosphate: step 3/6. The protein operates within amino-acid biosynthesis; L-methionine biosynthesis via salvage pathway; L-methionine from S-methyl-5-thio-alpha-D-ribose 1-phosphate: step 4/6. Bifunctional enzyme that catalyzes the enolization of 2,3-diketo-5-methylthiopentyl-1-phosphate (DK-MTP-1-P) into the intermediate 2-hydroxy-3-keto-5-methylthiopentenyl-1-phosphate (HK-MTPenyl-1-P), which is then dephosphorylated to form the acireductone 1,2-dihydroxy-3-keto-5-methylthiopentene (DHK-MTPene). The polypeptide is Enolase-phosphatase E1 (Bos taurus (Bovine)).